We begin with the raw amino-acid sequence, 304 residues long: Small ribosomal subunit protein uS2 (304 aa).

An N-acetylserine modification is found at Ser-2. 2 laminin-binding regions span residues 161-180 and 205-229; these read IPCN…MLAR and RDPE…EFQG. [DE]-W-[ST] repeat units follow at residues 230 to 232, 245 to 247, 275 to 277, 284 to 286, and 302 to 304; these read EWS and DWS. A laminin-binding region spans residues 242–304; that stretch reads EVADWSEGVA…DWGGATSDWS (63 aa). A disordered region spans residues 257–304; that stretch reads IQQFPAGTPAPAPAVKTEDWSTQPATEDWSTAPTAQASDWGGATSDWS. Positions 276–293 are enriched in polar residues; it reads WSTQPATEDWSTAPTAQA.

This sequence belongs to the universal ribosomal protein uS2 family. In terms of assembly, monomer (37LRP) and homodimer (67LR). Component of the small ribosomal subunit. Mature ribosomes consist of a small (40S) and a large (60S) subunit. The 40S subunit contains about 33 different proteins and 1 molecule of RNA (18S). The 60S subunit contains about 49 different proteins and 3 molecules of RNA (28S, 5.8S and 5S). Interacts with rps21. Interacts with several laminins including at least lamb1. Interacts with mdk. In terms of processing, acylated. Acylation may be a prerequisite for conversion of the monomeric 37 kDa laminin receptor precursor (37LRP) to the mature dimeric 67 kDa laminin receptor (67LR), and may provide a mechanism for membrane association. Post-translationally, cleaved by stromelysin-3 (ST3) at the cell surface. Cleavage by stromelysin-3 may be a mechanism to alter cell-extracellular matrix interactions.

It is found in the cell membrane. The protein resides in the cytoplasm. Its subcellular location is the nucleus. Required for the assembly and/or stability of the 40S ribosomal subunit. Required for the processing of the 20S rRNA-precursor to mature 18S rRNA in a late step of the maturation of 40S ribosomal subunits. Also functions as a cell surface receptor for laminin. Plays a role in cell adhesion to the basement membrane and in the consequent activation of signaling transduction pathways. May play a role in cell fate determination and tissue morphogenesis. This is Small ribosomal subunit protein uS2 (rpsa) from Sparus aurata (Gilthead sea bream).